A 278-amino-acid chain; its full sequence is Alcohol dehydrogenase-related 31 kDa protein (278 aa).

11–34 (YVADCGGIALETSKVLMTKNIAKL) is an NAD(+) binding site. S139 is a substrate binding site. Y152 functions as the Proton acceptor in the catalytic mechanism.

The protein belongs to the short-chain dehydrogenases/reductases (SDR) family.

The sequence is that of Alcohol dehydrogenase-related 31 kDa protein (Adhr) from Drosophila pseudoobscura pseudoobscura (Fruit fly).